The chain runs to 297 residues: Phosphatidylglycerol--prolipoprotein diacylglyceryl transferase (297 aa).

A run of 4 helical transmembrane segments spans residues Phe20 to Ile40, Glu57 to Phe77, Trp107 to Phe127, and Ile133 to Gly153. Residue Arg154 coordinates a 1,2-diacyl-sn-glycero-3-phospho-(1'-sn-glycerol). The next 3 helical transmembrane spans lie at Pro193–Phe213, Gly225–Leu245, and Ala266–Leu286.

It belongs to the Lgt family.

It is found in the cell inner membrane. It carries out the reaction L-cysteinyl-[prolipoprotein] + a 1,2-diacyl-sn-glycero-3-phospho-(1'-sn-glycerol) = an S-1,2-diacyl-sn-glyceryl-L-cysteinyl-[prolipoprotein] + sn-glycerol 1-phosphate + H(+). It participates in protein modification; lipoprotein biosynthesis (diacylglyceryl transfer). In terms of biological role, catalyzes the transfer of the diacylglyceryl group from phosphatidylglycerol to the sulfhydryl group of the N-terminal cysteine of a prolipoprotein, the first step in the formation of mature lipoproteins. The sequence is that of Phosphatidylglycerol--prolipoprotein diacylglyceryl transferase from Prochlorococcus marinus (strain MIT 9301).